Here is a 108-residue protein sequence, read N- to C-terminus: ATP synthase peripheral stalk subunit F6, mitochondrial (108 aa).

Residues 1–32 (MILQRLFRFSSVIRSAVSVHLRRNIGVTAVAF) constitute a mitochondrion transit peptide. N6-acetyllysine is present on residues Lys41 and Lys46. A Phosphoserine modification is found at Ser65. Lys79 carries the post-translational modification N6-acetyllysine. N6-acetyllysine; alternate occurs at positions 94 and 99. Lys94 and Lys99 each carry N6-succinyllysine; alternate. Position 105 is an N6-acetyllysine (Lys105).

This sequence belongs to the eukaryotic ATPase subunit F6 family. In terms of assembly, component of the ATP synthase complex composed at least of ATP5F1A/subunit alpha, ATP5F1B/subunit beta, ATP5MC1/subunit c (homooctomer), MT-ATP6/subunit a, MT-ATP8/subunit 8, ATP5ME/subunit e, ATP5MF/subunit f, ATP5MG/subunit g, ATP5MK/subunit k, ATP5MJ/subunit j, ATP5F1C/subunit gamma, ATP5F1D/subunit delta, ATP5F1E/subunit epsilon, ATP5PF/subunit F6, ATP5PB/subunit b, ATP5PD/subunit d, ATP5PO/subunit OSCP. ATP synthase complex consists of a soluble F(1) head domain (subunits alpha(3) and beta(3)) - the catalytic core - and a membrane F(0) domain - the membrane proton channel (subunits c, a, 8, e, f, g, k and j). These two domains are linked by a central stalk (subunits gamma, delta, and epsilon) rotating inside the F1 region and a stationary peripheral stalk (subunits F6, b, d, and OSCP).

Its subcellular location is the mitochondrion. The protein resides in the mitochondrion inner membrane. Its function is as follows. Subunit F6, of the mitochondrial membrane ATP synthase complex (F(1)F(0) ATP synthase or Complex V) that produces ATP from ADP in the presence of a proton gradient across the membrane which is generated by electron transport complexes of the respiratory chain. ATP synthase complex consist of a soluble F(1) head domain - the catalytic core - and a membrane F(1) domain - the membrane proton channel. These two domains are linked by a central stalk rotating inside the F(1) region and a stationary peripheral stalk. During catalysis, ATP synthesis in the catalytic domain of F(1) is coupled via a rotary mechanism of the central stalk subunits to proton translocation. In vivo, can only synthesize ATP although its ATP hydrolase activity can be activated artificially in vitro. Part of the complex F(0) domain. Part of the complex F(0) domain and the peripheric stalk, which acts as a stator to hold the catalytic alpha(3)beta(3) subcomplex and subunit a/ATP6 static relative to the rotary elements. The protein is ATP synthase peripheral stalk subunit F6, mitochondrial of Homo sapiens (Human).